Reading from the N-terminus, the 178-residue chain is Acireductone dioxygenase (178 aa).

The Fe(2+) site is built by His81, His83, Glu87, and His126. Residues His81, His83, Glu87, and His126 each coordinate Ni(2+).

The protein belongs to the acireductone dioxygenase (ARD) family. Requires Fe(2+) as cofactor. Ni(2+) is required as a cofactor.

Its subcellular location is the cytoplasm. It is found in the nucleus. It carries out the reaction 1,2-dihydroxy-5-(methylsulfanyl)pent-1-en-3-one + O2 = 4-methylsulfanyl-2-oxobutanoate + formate + 2 H(+). The enzyme catalyses 1,2-dihydroxy-5-(methylsulfanyl)pent-1-en-3-one + O2 = 3-(methylsulfanyl)propanoate + CO + formate + 2 H(+). The protein operates within amino-acid biosynthesis; L-methionine biosynthesis via salvage pathway; L-methionine from S-methyl-5-thio-alpha-D-ribose 1-phosphate: step 5/6. Catalyzes 2 different reactions between oxygen and the acireductone 1,2-dihydroxy-3-keto-5-methylthiopentene (DHK-MTPene) depending upon the metal bound in the active site. Fe-containing acireductone dioxygenase (Fe-ARD) produces formate and 2-keto-4-methylthiobutyrate (KMTB), the alpha-ketoacid precursor of methionine in the methionine recycle pathway. Ni-containing acireductone dioxygenase (Ni-ARD) produces methylthiopropionate, carbon monoxide and formate, and does not lie on the methionine recycle pathway. This is Acireductone dioxygenase (adi1) from Neurospora crassa (strain ATCC 24698 / 74-OR23-1A / CBS 708.71 / DSM 1257 / FGSC 987).